The following is a 470-amino-acid chain: Sorting nexin-17 (470 aa).

The 109-residue stretch at 1–109 folds into the PX domain; sequence MHFSIPETES…SFLRRAQQET (109 aa). R36, S38, K62, and R75 together coordinate a 1,2-diacyl-sn-glycero-3-phospho-(1D-myo-inositol-3-phosphate). Residues 115–206 form the Ras-associating domain; it reads EEVSLEVLLS…YKIVLRKSYW (92 aa). The segment at 115-432 is FERM-like; the sequence is EEVSLEVLLS…DASRESMVKL (318 aa). The interval 270–432 is PTB-like F3 module; the sequence is GYLRFDACVA…DASRESMVKL (163 aa). S336, S407, S409, S415, S421, S437, and S440 each carry phosphoserine. The interval 400–426 is disordered; it reads VGGTLRRSDSQQAVKSPPLLESPDASR.

This sequence belongs to the sorting nexin family. In terms of assembly, monomer. Interacts with APP (via cytoplasmic YXNPXY motif). Interacts with KIF1B. Interacts with the C-termini of P-selectin, PTC, LDLR, VLDLR, LRP1 and LRP8. Interacts with KRIT1 (via N-terminus). Interacts with HRAS. Interacts with ITGB1 and ITGB5 (via NPxY motif). Interacts with CCDC22 and CCDC93; the interaction associates SNX17 with the CCC complex. Interacts (via C-terminus) with VPS26C and VPS35L; the interactions are direct and associate SNX17 with the retriever complex.

Its subcellular location is the cytoplasm. The protein resides in the early endosome. The protein localises to the cytoplasmic vesicle membrane. Critical regulator of endosomal recycling of numerous surface proteins, including integrins, signaling receptor and channels. Binds to NPxY sequences in the cytoplasmic tails of target cargos. Associates with retriever and CCC complexes to prevent lysosomal degradation and promote cell surface recycling of numerous cargos such as integrins ITGB1, ITGB5 and their associated alpha subunits. Also required for maintenance of normal cell surface levels of APP and LRP1. Interacts with membranes containing phosphatidylinositol 3-phosphate (PtdIns(3P)). This is Sorting nexin-17 (SNX17) from Bos taurus (Bovine).